The sequence spans 488 residues: IQ domain-containing protein IQM1 (488 aa).

Residues 20 to 46 (RTNSFKRDDTNRHQNSPKSTMERSLSF) are disordered. A compositionally biased stretch (polar residues) spans 32-46 (HQNSPKSTMERSLSF). One can recognise an IQ domain in the interval 106-135 (LDAAATTLQKVYKSYRTRRNLADCAVVVEE). Disordered stretches follow at residues 377–403 (SFKSTADEEEERKEVSEEVEIPSEKEE) and 448–472 (SPRVSPANSYGPIPSPRPSPKVRVS). Residues 388–403 (RKEVSEEVEIPSEKEE) are compositionally biased toward basic and acidic residues.

As to quaternary structure, interacts (via IQ domain) with CAM5. In terms of tissue distribution, highly expressed in leaf mesophyll cells. Expressed in roots, rosette and cauline leaves, stems, flowers and siliques.

The protein resides in the cytoplasm. It is found in the nucleus. Involved in the modulation of stomatal movement. Promotes stomatal opening. May play a role in the regulation of chitin signaling. May be involved in biotic and abiotic stress responses. This chain is IQ domain-containing protein IQM1, found in Arabidopsis thaliana (Mouse-ear cress).